The chain runs to 208 residues: NAD(P)H-quinone oxidoreductase subunit I (208 aa).

4Fe-4S ferredoxin-type domains lie at 55 to 84 and 95 to 124; these read GRIHYEFDKCIACEVCVRVCPINLPVVDWV and RNYSIDFGVCIFCGNCVEYCPTNCLSMTEE. Residues C64, C67, C70, C74, C104, C107, C110, and C114 each contribute to the [4Fe-4S] cluster site.

Belongs to the complex I 23 kDa subunit family. In terms of assembly, NDH-1 is composed of at least 11 different subunits. It depends on [4Fe-4S] cluster as a cofactor.

The protein localises to the cellular thylakoid membrane. The catalysed reaction is a plastoquinone + NADH + (n+1) H(+)(in) = a plastoquinol + NAD(+) + n H(+)(out). It catalyses the reaction a plastoquinone + NADPH + (n+1) H(+)(in) = a plastoquinol + NADP(+) + n H(+)(out). In terms of biological role, NDH-1 shuttles electrons from an unknown electron donor, via FMN and iron-sulfur (Fe-S) centers, to quinones in the respiratory and/or the photosynthetic chain. The immediate electron acceptor for the enzyme in this species is believed to be plastoquinone. Couples the redox reaction to proton translocation, and thus conserves the redox energy in a proton gradient. This chain is NAD(P)H-quinone oxidoreductase subunit I, found in Prochlorococcus marinus subsp. pastoris (strain CCMP1986 / NIES-2087 / MED4).